The sequence spans 349 residues: MRKIIHIDCDCFYAALEMRDDPSLRGKALAVGGSPDKRGVVATCSYEARAYGVRSAMAMRTALKLCPDLLVVRPRFDVYRAVSKQIHAIFRDYTELIEPLSLDEAYLDVSASPHFAGSATRIAQDIRRRVAEELRITVSAGVAPNKFLAKIASDWRKPDGLFVITPEQVDGFVAELPVAKLHGVGKVTAERLARMGIRTCADLRQGSKLSLVREFGSFGERLWSLAHGVDERPVEVDSRRQSVSVECTFDRDLPDLAACLEELPALLEELDGRLLRLDGSYRPDKPFVKLKFHDFTQTTLEQAGAGRDLDSYRQMLGQAFARGSRPVRLIGVGVRLLDLQGAHEQLRLF.

Residues isoleucine 4 to glycine 185 enclose the UmuC domain. Residues aspartate 8 and aspartate 103 each coordinate Mg(2+). Residue glutamate 104 is part of the active site.

Belongs to the DNA polymerase type-Y family. Monomer. Requires Mg(2+) as cofactor.

The protein resides in the cytoplasm. It carries out the reaction DNA(n) + a 2'-deoxyribonucleoside 5'-triphosphate = DNA(n+1) + diphosphate. Its function is as follows. Poorly processive, error-prone DNA polymerase involved in untargeted mutagenesis. Copies undamaged DNA at stalled replication forks, which arise in vivo from mismatched or misaligned primer ends. These misaligned primers can be extended by PolIV. Exhibits no 3'-5' exonuclease (proofreading) activity. May be involved in translesional synthesis, in conjunction with the beta clamp from PolIII. This chain is DNA polymerase IV, found in Pseudomonas paraeruginosa (strain DSM 24068 / PA7) (Pseudomonas aeruginosa (strain PA7)).